The sequence spans 890 residues: Exo-beta-D-glucosaminidase (890 aa).

The N-terminal stretch at 1–18 (MIAKAVAALLLGSGLASA) is a signal peptide. A propeptide spanning residues 19–26 (AGTPLTSK) is cleaved from the precursor. N-linked (GlcNAc...) asparagine glycosylation is found at N194, N334, and N438. Residue D462 is the Proton donor of the active site. The active-site Nucleophile is the E537. N576 and N687 each carry an N-linked (GlcNAc...) asparagine glycan.

It belongs to the glycosyl hydrolase 2 family. In terms of assembly, monomer.

It localises to the secreted. The protein resides in the extracellular space. It catalyses the reaction Hydrolysis of chitosan or chitosan oligosaccharides to remove successive D-glucosamine residues from the non-reducing termini.. Hydrolyzes chitosan and chitooligosaccharides with retention of anomeric configuration. Has no activity against beta-D-galactoside, beta-D-glucuronide, beta-D-mannoside, chitin, glycol chitosan, cellulose, N,N'-diacetylchitibiose and pNP-GlcNAc. In Hypocrea virens (Gliocladium virens), this protein is Exo-beta-D-glucosaminidase.